The chain runs to 563 residues: Arginine--tRNA ligase (563 aa).

The 'HIGH' region signature appears at 121–131; the sequence is PNIAKPFSIGH.

Belongs to the class-I aminoacyl-tRNA synthetase family. Monomer.

Its subcellular location is the cytoplasm. The enzyme catalyses tRNA(Arg) + L-arginine + ATP = L-arginyl-tRNA(Arg) + AMP + diphosphate. The chain is Arginine--tRNA ligase from Streptococcus pneumoniae (strain ATCC BAA-255 / R6).